A 699-amino-acid polypeptide reads, in one-letter code: Elongation factor G 1 (699 aa).

The tr-type G domain occupies 8 to 290 (ERYRNIGICA…AVIEYLPSPT (283 aa)). Residues 17-24 (AHVDAGKT), 88-92 (DTPGH), and 142-145 (NKMD) contribute to the GTP site.

It belongs to the TRAFAC class translation factor GTPase superfamily. Classic translation factor GTPase family. EF-G/EF-2 subfamily.

The protein resides in the cytoplasm. In terms of biological role, catalyzes the GTP-dependent ribosomal translocation step during translation elongation. During this step, the ribosome changes from the pre-translocational (PRE) to the post-translocational (POST) state as the newly formed A-site-bound peptidyl-tRNA and P-site-bound deacylated tRNA move to the P and E sites, respectively. Catalyzes the coordinated movement of the two tRNA molecules, the mRNA and conformational changes in the ribosome. This Hahella chejuensis (strain KCTC 2396) protein is Elongation factor G 1.